Here is a 2005-residue protein sequence, read N- to C-terminus: Structural maintenance of chromosomes flexible hinge domain-containing protein 1 (2005 aa).

Residues 1–13 are compositionally biased toward gly residues; it reads MAAADGGGPGGAS. Residues 1-23 form a disordered region; it reads MAAADGGGPGGASVGTEEDGGGV. A2 carries the post-translational modification N-acetylalanine. An ATPase activity domain region spans residues 111-702; the sequence is TKERIDFLPH…LSVTWPEGDE (592 aa). K1349 carries the N6-acetyllysine modification. Residues K1374 and K1496 each participate in a glycyl lysine isopeptide (Lys-Gly) (interchain with G-Cter in SUMO2) cross-link. The residue at position 1499 (T1499) is a Phosphothreonine. Positions 1720–1847 constitute an SMC hinge domain; that stretch reads GDVLGKIAHL…DNLDAANHYR (128 aa). K1802 bears the N6-succinyllysine mark. At S1974 the chain carries Phosphoserine.

This sequence belongs to the SMC family. Highly divergent. In terms of assembly, homodimer; homodimerizes via its SMC hinge domain. Interacts with LRIF1. Sumoylated with SUMO1.

The protein resides in the chromosome. It catalyses the reaction ATP + H2O = ADP + phosphate + H(+). Its function is as follows. Non-canonical member of the structural maintenance of chromosomes (SMC) protein family that plays a key role in epigenetic silencing by regulating chromatin architecture. Promotes heterochromatin formation in both autosomes and chromosome X, probably by mediating the merge of chromatin compartments. Plays a key role in chromosome X inactivation in females by promoting the spreading of heterochromatin. Recruited to inactivated chromosome X by Xist RNA and acts by mediating the merge of chromatin compartments: promotes random chromatin interactions that span the boundaries of existing structures, leading to create a compartment-less architecture typical of inactivated chromosome X. Required to facilitate Xist RNA spreading. Also required for silencing of a subset of clustered autosomal loci in somatic cells, such as the DUX4 locus. Has ATPase activity; may participate in structural manipulation of chromatin in an ATP-dependent manner as part of its role in gene expression regulation. Also plays a role in DNA repair: localizes to sites of DNA double-strand breaks in response to DNA damage to promote the repair of DNA double-strand breaks. Acts by promoting non-homologous end joining (NHEJ) and inhibiting homologous recombination (HR) repair. The protein is Structural maintenance of chromosomes flexible hinge domain-containing protein 1 of Homo sapiens (Human).